The chain runs to 957 residues: Translation initiation factor IF-2 (957 aa).

Disordered regions lie at residues Lys-34–Lys-282 and Ser-311–Gly-367. Residues Pro-107–Arg-161 show a composition bias toward pro residues. The segment covering Thr-163–Gly-188 has biased composition (basic and acidic residues). A compositionally biased stretch (pro residues) spans Pro-209–Pro-242. 2 stretches are compositionally biased toward basic and acidic residues: residues Leu-250–Ile-259 and Lys-266–Arg-275. The tr-type G domain maps to Arg-444–Tyr-617. Residues Gly-453–Thr-460 form a G1 region. Gly-453–Thr-460 contributes to the GTP binding site. The tract at residues Gly-478–His-482 is G2. Residues Asp-503 to Gly-506 are G3. GTP contacts are provided by residues Asp-503–His-507 and Asn-557–Asp-560. The interval Asn-557–Asp-560 is G4. A G5 region spans residues Ser-593–Leu-595.

Belongs to the TRAFAC class translation factor GTPase superfamily. Classic translation factor GTPase family. IF-2 subfamily.

Its subcellular location is the cytoplasm. Its function is as follows. One of the essential components for the initiation of protein synthesis. Protects formylmethionyl-tRNA from spontaneous hydrolysis and promotes its binding to the 30S ribosomal subunits. Also involved in the hydrolysis of GTP during the formation of the 70S ribosomal complex. The protein is Translation initiation factor IF-2 of Thermosynechococcus vestitus (strain NIES-2133 / IAM M-273 / BP-1).